The chain runs to 217 residues: DNA transformation protein TfoX (217 aa).

It belongs to the Sxy/TfoX family.

Functionally, required for DNA transformation. Positively regulates genes required for DNA transformation (late competence-specific genes) in association with CRP. Required for expression of the late competence-specific gene, com101A. Required for expression of the dprABC operon. The chain is DNA transformation protein TfoX from Haemophilus influenzae (strain ATCC 51907 / DSM 11121 / KW20 / Rd).